The following is a 167-amino-acid chain: Ureidoglycolate lyase (167 aa).

Belongs to the ureidoglycolate lyase family. As to quaternary structure, homodimer. It depends on Ni(2+) as a cofactor.

It carries out the reaction (S)-ureidoglycolate = urea + glyoxylate. The protein operates within nitrogen metabolism; (S)-allantoin degradation. Its function is as follows. Catalyzes the catabolism of the allantoin degradation intermediate (S)-ureidoglycolate, generating urea and glyoxylate. Involved in the utilization of allantoin as nitrogen source. This chain is Ureidoglycolate lyase, found in Pseudomonas fluorescens (strain SBW25).